Consider the following 911-residue polypeptide: Zinc finger protein 721 (911 aa).

The C2H2-type 1; degenerate zinc finger occupies 69–91; it reads FQCNARVKVFSKFANSNKDKTRH. The segment at 97–119 adopts a C2H2-type 2 zinc-finger fold; that stretch reads FKCNECGKSFQKFSDLTQHKGIH. The segment at 125–147 adopts a C2H2-type 3; degenerate zinc-finger fold; sequence YTCEERGKDFGWYTDLNQHKKIH. The C2H2-type 4 zinc finger occupies 153 to 175; it reads YKCEECGKAFNRSTNLTAHKRIH. Residues 181 to 203 form a C2H2-type 5; degenerate zinc finger; sequence YTGEDRDRAFGWSTNLNEYKKIH. C2H2-type zinc fingers lie at residues 209 to 231, 237 to 259, 265 to 287, 293 to 315, 321 to 343, 349 to 371, and 377 to 399; these read YKCK…EKIH, YKCK…KRIH, FKCL…RRIH, YTCE…RRIH, YTCG…RRIH, YKCE…KKIH, and YKCE…KRIH. A C2H2-type 13; degenerate zinc finger spans residues 405–427; that stretch reads YTCEDRGRAFGLSTNLNEYKKIH. 6 consecutive C2H2-type zinc fingers follow at residues 433-455, 461-483, 489-511, 517-539, 545-567, and 573-595; these read YKCK…EKIH, YKCK…KRIH, FECL…RRIH, YTCE…RRIH, and YKCE…KKIH. K478 participates in a covalent cross-link: Glycyl lysine isopeptide (Lys-Gly) (interchain with G-Cter in SUMO2). The C2H2-type 20; degenerate zinc finger occupies 601 to 623; the sequence is YKCEECGKDFVWYTDLNQQKKIY. Residues 629 to 651 form a C2H2-type 21; degenerate zinc finger; it reads YKCEECGKAFAPSTDLNQHTKIL. A Glycyl lysine isopeptide (Lys-Gly) (interchain with G-Cter in SUMO2) cross-link involves residue K649. 2 consecutive C2H2-type zinc fingers follow at residues 657–679 and 685–707; these read YKCE…KKIH and YKCE…RRVH. The segment at 713–735 adopts a C2H2-type 24; degenerate zinc-finger fold; that stretch reads YKCEDRGRSFGWSTNLNEYKKIH. C2H2-type zinc fingers lie at residues 741–763, 769–791, 797–819, 825–847, 853–875, and 881–903; these read YKCK…EKIH, YKCK…KRIH, FKCL…RRIH, YTCE…RRIH, and YTCG…KKIH. Residue K786 forms a Glycyl lysine isopeptide (Lys-Gly) (interchain with G-Cter in SUMO2) linkage.

Belongs to the krueppel C2H2-type zinc-finger protein family.

The protein resides in the nucleus. Its function is as follows. May be involved in transcriptional regulation. This is Zinc finger protein 721 (ZNF721) from Homo sapiens (Human).